The primary structure comprises 164 residues: Ribosome maturation factor RimP (164 aa).

Belongs to the RimP family.

The protein resides in the cytoplasm. Its function is as follows. Required for maturation of 30S ribosomal subunits. In Mycoplasma mycoides subsp. mycoides SC (strain CCUG 32753 / NCTC 10114 / PG1), this protein is Ribosome maturation factor RimP.